A 311-amino-acid chain; its full sequence is Non-homologous end joining protein Ku (311 aa).

The region spanning 26-210 is the Ku domain; it reads ISFGLVNIPI…NVNDKELQTA (185 aa). A disordered region spans residues 269 to 311; sequence ASIDRTRRPNRETPAAAPAQAAEPKGAGDKKQKTTRKKASGTS. Low complexity predominate over residues 282–293; that stretch reads PAAAPAQAAEPK. Basic residues predominate over residues 301 to 311; the sequence is KTTRKKASGTS.

This sequence belongs to the prokaryotic Ku family. As to quaternary structure, homodimer. Interacts with LigD.

The protein resides in the spore core. With LigD forms a non-homologous end joining (NHEJ) DNA repair enzyme, which repairs dsDNA breaks with reduced fidelity. Binds linear dsDNA with 5'- and 3'- overhangs but not closed circular dsDNA nor ssDNA. Recruits and stimulates the ligase activity of LigD. Probably involved in DNA repair during spore germination. The polypeptide is Non-homologous end joining protein Ku (Bacillus subtilis (strain 168)).